A 438-amino-acid chain; its full sequence is GTPase Obg (438 aa).

Positions Ser2–Leu160 constitute an Obg domain. Residues Asn128 to Pro147 are disordered. Residues Ala161–Glu339 form the OBG-type G domain. GTP is bound by residues Gly167–Ser174, Phe192–Val196, Asp214–Gly217, Asn284–Asp287, and Ser320–Val322. The Mg(2+) site is built by Ser174 and Thr194. Residues Gly360 to Glu438 enclose the OCT domain.

The protein belongs to the TRAFAC class OBG-HflX-like GTPase superfamily. OBG GTPase family. As to quaternary structure, monomer. It depends on Mg(2+) as a cofactor.

Its subcellular location is the cytoplasm. Its function is as follows. An essential GTPase which binds GTP, GDP and possibly (p)ppGpp with moderate affinity, with high nucleotide exchange rates and a fairly low GTP hydrolysis rate. Plays a role in control of the cell cycle, stress response, ribosome biogenesis and in those bacteria that undergo differentiation, in morphogenesis control. This Enterococcus faecalis (strain ATCC 700802 / V583) protein is GTPase Obg.